A 340-amino-acid chain; its full sequence is Uroporphyrinogen decarboxylase (340 aa).

Residues 23-27, D72, Y147, T202, and H316 contribute to the substrate site; that span reads RQAGR.

Belongs to the uroporphyrinogen decarboxylase family. Homodimer.

The protein resides in the cytoplasm. It carries out the reaction uroporphyrinogen III + 4 H(+) = coproporphyrinogen III + 4 CO2. It participates in porphyrin-containing compound metabolism; protoporphyrin-IX biosynthesis; coproporphyrinogen-III from 5-aminolevulinate: step 4/4. Catalyzes the decarboxylation of four acetate groups of uroporphyrinogen-III to yield coproporphyrinogen-III. The protein is Uroporphyrinogen decarboxylase of Geobacter metallireducens (strain ATCC 53774 / DSM 7210 / GS-15).